We begin with the raw amino-acid sequence, 63 residues long: Serine protease inhibitor 3 (63 aa).

Residues 1–23 (MAKLLAVFLVLLIAALVCEQALA) form the signal peptide. 3 disulfides stabilise this stretch: Cys-24/Cys-39, Cys-34/Cys-52, and Cys-37/Cys-47. Residues 24-55 (CTPGSRKYDGCNWCTCSSGGAWICTLKYCPPS) form the Pacifastin domain.

It belongs to the protease inhibitor I19 family. Expressed in hemolymph, ovaries, testes and fat body of adults but are absent in the gut. Also present in larval hemolymph and fat body.

The protein resides in the secreted. Its function is as follows. In vitro, active against alpha-chymotrypsin. This Schistocerca gregaria (Desert locust) protein is Serine protease inhibitor 3.